The following is an 85-amino-acid chain: NAD(P)H-quinone oxidoreductase subunit O (85 aa).

Belongs to the complex I NdhO subunit family. NDH-1 can be composed of about 15 different subunits; different subcomplexes with different compositions have been identified which probably have different functions.

The protein resides in the cellular thylakoid membrane. The enzyme catalyses a plastoquinone + NADH + (n+1) H(+)(in) = a plastoquinol + NAD(+) + n H(+)(out). It carries out the reaction a plastoquinone + NADPH + (n+1) H(+)(in) = a plastoquinol + NADP(+) + n H(+)(out). In terms of biological role, NDH-1 shuttles electrons from an unknown electron donor, via FMN and iron-sulfur (Fe-S) centers, to quinones in the respiratory and/or the photosynthetic chain. The immediate electron acceptor for the enzyme in this species is believed to be plastoquinone. Couples the redox reaction to proton translocation, and thus conserves the redox energy in a proton gradient. Cyanobacterial NDH-1 also plays a role in inorganic carbon-concentration. The sequence is that of NAD(P)H-quinone oxidoreductase subunit O from Synechococcus sp. (strain WH7803).